Here is a 609-residue protein sequence, read N- to C-terminus: Proteasome-associated ATPase (609 aa).

A disordered region spans residues 1–27; it reads MGSSERSEAFGTPRESDMSSGDEAELE. A coiled-coil region spans residues 17 to 96; the sequence is DMSSGDEAEL…LREEVDRLGQ (80 aa). An ATP-binding site is contributed by 296–301; the sequence is GCGKTL. Residues 608–609 are docks into pockets in the proteasome alpha-ring; sequence YL.

It belongs to the AAA ATPase family. As to quaternary structure, homohexamer. Assembles into a hexameric ring structure that caps the 20S proteasome core. Strongly interacts with the prokaryotic ubiquitin-like protein Pup through a hydrophobic interface; the interacting region of ARC lies in its N-terminal coiled-coil domain. There is one Pup binding site per ARC hexamer ring. Upon ATP-binding, the C-terminus of ARC interacts with the alpha-rings of the proteasome core, possibly by binding to the intersubunit pockets.

It functions in the pathway protein degradation; proteasomal Pup-dependent pathway. Functionally, ATPase which is responsible for recognizing, binding, unfolding and translocation of pupylated proteins into the bacterial 20S proteasome core particle. May be essential for opening the gate of the 20S proteasome via an interaction with its C-terminus, thereby allowing substrate entry and access to the site of proteolysis. Thus, the C-termini of the proteasomal ATPase may function like a 'key in a lock' to induce gate opening and therefore regulate proteolysis. The polypeptide is Proteasome-associated ATPase (Mycobacterium avium (strain 104)).